We begin with the raw amino-acid sequence, 146 residues long: VQWTAEEKQLITGLWGKVNVAECGAEALARLLIVYPWTQRFFASFGNLSSPTAVLGNPKVQAHGKKVLTSFGDAVKNLDSIKNTFSQLSELHCDKLHVDPENFRLLGDILVVVLAAHFGKDFTPDCQAAWQKLVRVVAHALARKYH.

Positions Gln2–His146 constitute a Globin domain. Heme b contacts are provided by His63 and His92.

The protein belongs to the globin family. In terms of assembly, heterotetramer of two alpha chains and two beta chains. Red blood cells.

Its function is as follows. Involved in oxygen transport from the lung to the various peripheral tissues. This chain is Hemoglobin subunit beta (HBB), found in Sturnus vulgaris (Starling).